The primary structure comprises 226 residues: Endonuclease V (226 aa).

Mg(2+) contacts are provided by Asp43 and Asp108.

The protein belongs to the endonuclease V family. Requires Mg(2+) as cofactor.

It is found in the cytoplasm. The catalysed reaction is Endonucleolytic cleavage at apurinic or apyrimidinic sites to products with a 5'-phosphate.. Its function is as follows. DNA repair enzyme involved in the repair of deaminated bases. Selectively cleaves double-stranded DNA at the second phosphodiester bond 3' to a deoxyinosine leaving behind the intact lesion on the nicked DNA. The polypeptide is Endonuclease V (Thermosipho melanesiensis (strain DSM 12029 / CIP 104789 / BI429)).